The chain runs to 88 residues: Small ribosomal subunit protein bS20 (88 aa).

The protein belongs to the bacterial ribosomal protein bS20 family.

Its function is as follows. Binds directly to 16S ribosomal RNA. This Methylocella silvestris (strain DSM 15510 / CIP 108128 / LMG 27833 / NCIMB 13906 / BL2) protein is Small ribosomal subunit protein bS20.